The primary structure comprises 391 residues: MAINAGSSSLKFQLLNMPEEELVTKGVVERIGLGDGIFTIEVKGEKVTETFDIPDHAFAVKTLLEKLTSHEIIQSLDEIEGIGHRVVHGGEKFNDSVLITDEVIQGIEECNELAPLHNPANIVGIRAFKEVLPNVPAVAVFDTAFHQTMPESSFLYSLPYDYYKEFGIRKYGFHGTSHKYVSQRAAELLGRPIEQLRLLSCHLGNGASIAAIDGGKSIDTSMGFTPLAGVTMGTRSGNIDPALIPFIMEKTGQTANEVINTLNKKSGLLGVSGFSSDLRDIEEQAGEGNDRAELALEVFTSRIHKYIGSYAARMSGVDAIIFTAGIGENSTVIRERVLRGLEFMGVYWDPSLNQVRGKEAFINYPHSPVKVLVIPTNEEVMIARDTVRLAQ.

Mg(2+) is bound at residue N4. K11 contacts ATP. R85 contacts substrate. The Proton donor/acceptor role is filled by D142. Residues 202-206, 277-279, and 325-329 each bind ATP; these read HLGNG, DLR, and GIGEN. Residue E378 participates in Mg(2+) binding.

The protein belongs to the acetokinase family. As to quaternary structure, homodimer. The cofactor is Mg(2+). It depends on Mn(2+) as a cofactor.

The protein resides in the cytoplasm. It carries out the reaction acetate + ATP = acetyl phosphate + ADP. It participates in metabolic intermediate biosynthesis; acetyl-CoA biosynthesis; acetyl-CoA from acetate: step 1/2. Catalyzes the formation of acetyl phosphate from acetate and ATP. Can also catalyze the reverse reaction. This Halalkalibacterium halodurans (strain ATCC BAA-125 / DSM 18197 / FERM 7344 / JCM 9153 / C-125) (Bacillus halodurans) protein is Acetate kinase.